The following is a 127-amino-acid chain: Fumarate reductase subunit C (127 aa).

3 helical membrane passes run 30–50 (ATVL…GSLV), 58–78 (GWLS…ALLG), and 107–127 (IIVL…LMVV).

This sequence belongs to the FrdC family. Part of an enzyme complex containing four subunits: a flavoprotein (FrdA), an iron-sulfur protein (FrdB), and two hydrophobic anchor proteins (FrdC and FrdD).

It is found in the cell inner membrane. Anchors the catalytic components of the fumarate reductase complex to the cell membrane, binds quinones. The protein is Fumarate reductase subunit C of Vibrio atlanticus (strain LGP32) (Vibrio splendidus (strain Mel32)).